Consider the following 434-residue polypeptide: Histidinol dehydrogenase (434 aa).

NAD(+) is bound by residues tyrosine 130, glutamine 188, and asparagine 211. Positions 237, 259, and 262 each coordinate substrate. 2 residues coordinate Zn(2+): glutamine 259 and histidine 262. Catalysis depends on proton acceptor residues glutamate 326 and histidine 327. Positions 327, 360, 414, and 419 each coordinate substrate. Aspartate 360 contacts Zn(2+). Histidine 419 is a binding site for Zn(2+).

The protein belongs to the histidinol dehydrogenase family. Homodimer. Zn(2+) is required as a cofactor.

It carries out the reaction L-histidinol + 2 NAD(+) + H2O = L-histidine + 2 NADH + 3 H(+). It functions in the pathway amino-acid biosynthesis; L-histidine biosynthesis; L-histidine from 5-phospho-alpha-D-ribose 1-diphosphate: step 9/9. Functionally, catalyzes the sequential NAD-dependent oxidations of L-histidinol to L-histidinaldehyde and then to L-histidine. The chain is Histidinol dehydrogenase from Shigella sonnei (strain Ss046).